A 331-amino-acid polypeptide reads, in one-letter code: L-lactate dehydrogenase A chain (331 aa).

Residues 29–57 (GMVG…MEDK) and Arg98 contribute to the NAD(+) site. Residues Arg105, Asn137, and Arg168 each contribute to the substrate site. An NAD(+)-binding site is contributed by Asn137. His192 serves as the catalytic Proton acceptor. Thr247 contacts substrate.

The protein belongs to the LDH/MDH superfamily. LDH family. Homotetramer.

Its subcellular location is the cytoplasm. It catalyses the reaction (S)-lactate + NAD(+) = pyruvate + NADH + H(+). Its pathway is fermentation; pyruvate fermentation to lactate; (S)-lactate from pyruvate: step 1/1. In terms of biological role, interconverts simultaneously and stereospecifically pyruvate and lactate with concomitant interconversion of NADH and NAD(+). The protein is L-lactate dehydrogenase A chain (ldha) of Champsocephalus gunnari (Mackerel icefish).